A 293-amino-acid chain; its full sequence is Elongation factor Ts (293 aa).

The involved in Mg(2+) ion dislocation from EF-Tu stretch occupies residues 80-83; that stretch reads TDFV.

Belongs to the EF-Ts family.

Its subcellular location is the cytoplasm. Its function is as follows. Associates with the EF-Tu.GDP complex and induces the exchange of GDP to GTP. It remains bound to the aminoacyl-tRNA.EF-Tu.GTP complex up to the GTP hydrolysis stage on the ribosome. The polypeptide is Elongation factor Ts (Burkholderia cenocepacia (strain HI2424)).